Here is an 852-residue protein sequence, read N- to C-terminus: MVAKGKKASADAVYAKKTTRSANPFDNSTAQSSKRGNPFDVHVNKEKFKILGRICKHDRGMPGVSRAKALQKRAQTLGQQFAVKHKTNRFKDNRIGKHLSGDQLTESVMNARYLAEKMSQVRSNQKAEKFNLNDDELLTHRGQTLEEIEQYRDERSDDEELDDEALDADFTAAAHFGGEGDSAQDRQAAIDEMIVEQKRRKNEIAKEKDEVYDLTEKLDANYKLLLPLVAKVTKDEQDAKPPPDAYDKLLKEMIFEPRGSVADKLINPDELAKQEAARLEKLENERLRRMRADGEEDEEASVAKPKHRSADDLDDGYFLAGEDDEGDDTLAYDLDGNLGTHLNGKKEAVLKGDENEDDDDKEGEEEEEEDSDEESDSEVDNLSDLKESESESEPEEAPKASKKKAKKSADTIPASLDTSIPFTIKMPKTYEDFTELLSKHATAQKAIIIERIIKCNHPKLEGVNRENVVKLYSFLLQYLKDLFEDASEQDIREHFQLLSKLMPYLYELTQLNPERMSNTLLEVIKEKYEEFRKNHKMYPSLDTLVYFKLVANLYSTSDFRHPVVTPCFIFIQHVLSRSRVRTRQEISMGLFLVTVVLEFVSQSKRLVPAVFNFLQGIVHMSIPKRDVEQLEITPPFERDGPLSKLLALPANTESTKLEPQQLQPTDLVTQTITPDFKVRALDTSLLLIKEALQLVEEHVGACYLAQPFLALLSRLPLESYPEHVHQHHKDATELAEKLAAQKMKPLAPAEKKPKALRLLEPRFEAVYDDKRRPKMSKAKEERAKLLHKIKREKKGAIREIRRDTSFVQMLRLKQTLQSDKERHEKVKRIYQEASVQQGELNELSRAKKKKKF.

The segment at 1-40 is disordered; the sequence is MVAKGKKASADAVYAKKTTRSANPFDNSTAQSSKRGNPFD. Over residues 20-35 the composition is skewed to polar residues; it reads RSANPFDNSTAQSSKR. Residues 190–221 adopt a coiled-coil conformation; that stretch reads IDEMIVEQKRRKNEIAKEKDEVYDLTEKLDAN. Disordered stretches follow at residues 288-324 and 338-410; these read RRMR…GEDD and LGTH…KSAD. The segment covering 344-353 has biased composition (basic and acidic residues); sequence GKKEAVLKGD. Residues 354-381 are compositionally biased toward acidic residues; the sequence is ENEDDDDKEGEEEEEEDSDEESDSEVDN. Residues 774 to 851 adopt a coiled-coil conformation; that stretch reads KMSKAKEERA…ELSRAKKKKK (78 aa).

Belongs to the NOP14 family. As to quaternary structure, component of the ribosomal small subunit (SSU) processome.

Its subcellular location is the nucleus. The protein resides in the nucleolus. In terms of biological role, involved in nucleolar processing of pre-18S ribosomal RNA. Has a role in the nuclear export of 40S pre-ribosomal subunit to the cytoplasm. The protein is Nucleolar protein 14 homolog (l(3)07882) of Drosophila melanogaster (Fruit fly).